Consider the following 82-residue polypeptide: Large ribosomal subunit protein bL31B (82 aa).

The protein belongs to the bacterial ribosomal protein bL31 family. Type B subfamily. Part of the 50S ribosomal subunit.

The polypeptide is Large ribosomal subunit protein bL31B (Acinetobacter baylyi (strain ATCC 33305 / BD413 / ADP1)).